Reading from the N-terminus, the 417-residue chain is Serine hydroxymethyltransferase (417 aa).

Residues Leu121 and 125 to 127 each bind (6S)-5,6,7,8-tetrahydrofolate; that span reads GHL. Residue Lys229 is modified to N6-(pyridoxal phosphate)lysine. 354–356 is a (6S)-5,6,7,8-tetrahydrofolate binding site; sequence SPF.

The protein belongs to the SHMT family. As to quaternary structure, homodimer. The cofactor is pyridoxal 5'-phosphate.

The protein localises to the cytoplasm. It carries out the reaction (6R)-5,10-methylene-5,6,7,8-tetrahydrofolate + glycine + H2O = (6S)-5,6,7,8-tetrahydrofolate + L-serine. It participates in one-carbon metabolism; tetrahydrofolate interconversion. It functions in the pathway amino-acid biosynthesis; glycine biosynthesis; glycine from L-serine: step 1/1. In terms of biological role, catalyzes the reversible interconversion of serine and glycine with tetrahydrofolate (THF) serving as the one-carbon carrier. This reaction serves as the major source of one-carbon groups required for the biosynthesis of purines, thymidylate, methionine, and other important biomolecules. Also exhibits THF-independent aldolase activity toward beta-hydroxyamino acids, producing glycine and aldehydes, via a retro-aldol mechanism. In Azotobacter vinelandii (strain DJ / ATCC BAA-1303), this protein is Serine hydroxymethyltransferase.